The primary structure comprises 475 residues: ATP synthase subunit beta, chloroplastic (475 aa).

Glycine 156–threonine 163 contacts ATP.

This sequence belongs to the ATPase alpha/beta chains family. In terms of assembly, F-type ATPases have 2 components, CF(1) - the catalytic core - and CF(0) - the membrane proton channel. CF(1) has five subunits: alpha(3), beta(3), gamma(1), delta(1), epsilon(1). CF(0) has four main subunits: a(1), b(1), b'(1) and c(9-12).

The protein resides in the plastid. It is found in the chloroplast thylakoid membrane. It catalyses the reaction ATP + H2O + 4 H(+)(in) = ADP + phosphate + 5 H(+)(out). In terms of biological role, produces ATP from ADP in the presence of a proton gradient across the membrane. The catalytic sites are hosted primarily by the beta subunits. This chain is ATP synthase subunit beta, chloroplastic, found in Phaeodactylum tricornutum (strain CCAP 1055/1).